A 269-amino-acid polypeptide reads, in one-letter code: Integral membrane protein 2C (269 aa).

Thr39 is subject to Phosphothreonine. Residues 57-77 (VGGVCYLSMGMVVLLMGLVFA) form a helical; Signal-anchor for type II membrane protein membrane-spanning segment. Residues 138-232 (FGGGDPADII…LCNGKDTYRL (95 aa)) enclose the BRICHOS domain. Residues Cys165 and Cys224 are joined by a disulfide bond. Asn171 carries an N-linked (GlcNAc...) asparagine glycan.

It belongs to the ITM2 family. Interacts with BACE1. Interacts with APP. Interacts with STMN2. In terms of processing, type I membrane-bound, as well as soluble, furin has a pre-eminent role in ITM2C proteolytic processing. PCSK7 and PCSK5 may also be involved although to a lesser extent. The soluble form of PCSK7 is incapable of processing ITM2C. Fails to undergo shedding by ADAM10 and intramembrane cleavage by SPPL2B.

The protein localises to the lysosome membrane. It localises to the cell membrane. Negative regulator of amyloid-beta peptide production. May inhibit the processing of APP by blocking its access to alpha- and beta-secretase. Binding to the beta-secretase-cleaved APP C-terminal fragment is negligible, suggesting that ITM2C is a poor gamma-secretase cleavage inhibitor. May play a role in TNF-induced cell death and neuronal differentiation. The polypeptide is Integral membrane protein 2C (Itm2c) (Rattus norvegicus (Rat)).